Here is a 244-residue protein sequence, read N- to C-terminus: Type III pantothenate kinase (244 aa).

Aspartate 6–lysine 13 lines the ATP pocket. Substrate contacts are provided by residues tyrosine 87 and glycine 94–arginine 97. The Proton acceptor role is filled by aspartate 96. Aspartate 117 lines the K(+) pocket. Residue threonine 120 coordinates ATP. Substrate is bound at residue threonine 172.

Belongs to the type III pantothenate kinase family. Homodimer. It depends on NH4(+) as a cofactor. K(+) serves as cofactor.

Its subcellular location is the cytoplasm. The enzyme catalyses (R)-pantothenate + ATP = (R)-4'-phosphopantothenate + ADP + H(+). It functions in the pathway cofactor biosynthesis; coenzyme A biosynthesis; CoA from (R)-pantothenate: step 1/5. Its function is as follows. Catalyzes the phosphorylation of pantothenate (Pan), the first step in CoA biosynthesis. This is Type III pantothenate kinase from Flavobacterium johnsoniae (strain ATCC 17061 / DSM 2064 / JCM 8514 / BCRC 14874 / CCUG 350202 / NBRC 14942 / NCIMB 11054 / UW101) (Cytophaga johnsonae).